Reading from the N-terminus, the 106-residue chain is Large ribosomal subunit protein uL24 (106 aa).

It belongs to the universal ribosomal protein uL24 family. In terms of assembly, part of the 50S ribosomal subunit.

Its function is as follows. One of two assembly initiator proteins, it binds directly to the 5'-end of the 23S rRNA, where it nucleates assembly of the 50S subunit. In terms of biological role, one of the proteins that surrounds the polypeptide exit tunnel on the outside of the subunit. This Marinobacter nauticus (strain ATCC 700491 / DSM 11845 / VT8) (Marinobacter aquaeolei) protein is Large ribosomal subunit protein uL24.